The sequence spans 193 residues: Xanthine phosphoribosyltransferase (193 aa).

Xanthine is bound by residues Leu20 and Asn27. 128-132 (ANGEA) provides a ligand contact to 5-phospho-alpha-D-ribose 1-diphosphate. Lys156 contributes to the xanthine binding site.

This sequence belongs to the purine/pyrimidine phosphoribosyltransferase family. Xpt subfamily. Homodimer.

It localises to the cytoplasm. It catalyses the reaction XMP + diphosphate = xanthine + 5-phospho-alpha-D-ribose 1-diphosphate. The protein operates within purine metabolism; XMP biosynthesis via salvage pathway; XMP from xanthine: step 1/1. Converts the preformed base xanthine, a product of nucleic acid breakdown, to xanthosine 5'-monophosphate (XMP), so it can be reused for RNA or DNA synthesis. This Exiguobacterium sp. (strain ATCC BAA-1283 / AT1b) protein is Xanthine phosphoribosyltransferase.